Reading from the N-terminus, the 84-residue chain is U4-theraphotoxin-Hhn1a (84 aa).

The N-terminal stretch at 1-22 (MKVTLIAILTCAAVLVLHTTAA) is a signal peptide. The propeptide occupies 23 to 47 (EELEESQLMEVGMPDTELAAVDGER). 3 disulfides stabilise this stretch: Cys-51-Cys-65, Cys-55-Cys-76, and Cys-70-Cys-81.

Belongs to the neurotoxin 12 (Hwtx-2) family. 02 (Hwtx-2) subfamily. In terms of tissue distribution, expressed by the venom gland.

It localises to the secreted. Functionally, postsynaptic neurotoxin. This is U4-theraphotoxin-Hhn1a from Cyriopagopus hainanus (Chinese bird spider).